The primary structure comprises 306 residues: Bifunctional protein FolD 1 (306 aa).

Residues Gly168–Ser170, Ser193, and Ile234 each bind NADP(+).

This sequence belongs to the tetrahydrofolate dehydrogenase/cyclohydrolase family. Homodimer.

The catalysed reaction is (6R)-5,10-methylene-5,6,7,8-tetrahydrofolate + NADP(+) = (6R)-5,10-methenyltetrahydrofolate + NADPH. The enzyme catalyses (6R)-5,10-methenyltetrahydrofolate + H2O = (6R)-10-formyltetrahydrofolate + H(+). It participates in one-carbon metabolism; tetrahydrofolate interconversion. Functionally, catalyzes the oxidation of 5,10-methylenetetrahydrofolate to 5,10-methenyltetrahydrofolate and then the hydrolysis of 5,10-methenyltetrahydrofolate to 10-formyltetrahydrofolate. In Rhizobium meliloti (strain 1021) (Ensifer meliloti), this protein is Bifunctional protein FolD 1.